The primary structure comprises 73 residues: MKKGIHPDYHMIDVKMTDGTVFQVRSTWGKEGEQMALEIDPLAHPAWTGGTAKLMDTGGRVSKFKNKYAGLGF.

This sequence belongs to the bacterial ribosomal protein bL31 family. Type A subfamily. Part of the 50S ribosomal subunit.

Functionally, binds the 23S rRNA. This chain is Large ribosomal subunit protein bL31, found in Cereibacter sphaeroides (strain ATCC 17025 / ATH 2.4.3) (Rhodobacter sphaeroides).